The following is a 100-amino-acid chain: Cytochrome bo(3) ubiquinol oxidase subunit 4 (100 aa).

The Cytoplasmic segment spans residues 1 to 9 (MLKNRYLKY). Residues 10-32 (LFILILLSILSIMPIFAIIYRIF) traverse the membrane as a helical segment. The Extracellular portion of the chain corresponds to 33 to 36 (SRNY). Residues 37–59 (LYAFIIVCLFFQILAHIKFFLNL) traverse the membrane as a helical segment. Residues 60-68 (DFSLEQRWK) lie on the Cytoplasmic side of the membrane. Residues 69 to 90 (LISVIFSLVVGLIILLGSIWVI) form a helical membrane-spanning segment. The Extracellular segment spans residues 91-100 (KNLNNNLCIM).

The protein belongs to the cytochrome c oxidase bacterial subunit 4 family. In terms of assembly, heterooctamer of two A chains, two B chains, two C chains and two D chains.

The protein resides in the cell membrane. In terms of biological role, cytochrome bo(3) ubiquinol terminal oxidase is the component of the aerobic respiratory chain of E.coli that predominates when cells are grown at high aeration. Has proton pump activity across the membrane in addition to electron transfer, pumping 2 protons/electron. This Buchnera aphidicola subsp. Baizongia pistaciae (strain Bp) protein is Cytochrome bo(3) ubiquinol oxidase subunit 4 (cyoD).